We begin with the raw amino-acid sequence, 200 residues long: MKLKSIMSQCQFIIGATSIKSLPDFSIPEVALAGRSNVGKSSLINAITNNRKNARISSKPGCTRQINFYLINKGLMVLVDLPGYGYSKADRATVNSYICLMEYYLLNRKNLSKVVLLIDAKVGFKEIDLDFIRWLEVHQILYQLVLTKIDRVQSNVLDVIVSDIQNFNLNFIIYPIINVSSKCKQGIEELIYEIAQCIKK.

The region spanning 26-200 (SIPEVALAGR…IYEIAQCIKK (175 aa)) is the EngB-type G domain. GTP contacts are provided by residues 34-41 (GRSNVGKS), 61-65 (GCTRQ), 80-83 (DLPG), 147-150 (TKID), and 179-181 (VSS). Mg(2+) is bound by residues Ser41 and Thr63.

The protein belongs to the TRAFAC class TrmE-Era-EngA-EngB-Septin-like GTPase superfamily. EngB GTPase family. Requires Mg(2+) as cofactor.

Necessary for normal cell division and for the maintenance of normal septation. The polypeptide is Probable GTP-binding protein EngB (Ehrlichia ruminantium (strain Welgevonden)).